The primary structure comprises 225 residues: UPF0758 protein NMB1038 (225 aa).

The 123-residue stretch at Val-102–Met-224 folds into the MPN domain. Residues His-173, His-175, and Asp-186 each contribute to the Zn(2+) site. The JAMM motif signature appears at His-173–Asp-186.

Belongs to the UPF0758 family.

In Neisseria meningitidis serogroup B (strain ATCC BAA-335 / MC58), this protein is UPF0758 protein NMB1038.